We begin with the raw amino-acid sequence, 486 residues long: Cardiolipin synthase A (486 aa).

2 helical membrane passes run 3-23 (TFYTVISWLSVFGYWLLIAGV) and 38-58 (MAWLLIIYILPLVGIIAYLSF). 2 consecutive PLD phosphodiesterase domains span residues 219–246 (MDLRQHRKIVLIDNYVAYTGSMNMVDPR) and 399–426 (EGGLLHSKSVLVDGQLSLVGTVNLDMRS). Catalysis depends on residues histidine 224, lysine 226, aspartate 231, histidine 404, lysine 406, and aspartate 411.

This sequence belongs to the phospholipase D family. Cardiolipin synthase subfamily. ClsA sub-subfamily.

It is found in the cell inner membrane. It catalyses the reaction 2 a 1,2-diacyl-sn-glycero-3-phospho-(1'-sn-glycerol) = a cardiolipin + glycerol. Its function is as follows. Catalyzes the reversible phosphatidyl group transfer from one phosphatidylglycerol molecule to another to form cardiolipin (CL) (diphosphatidylglycerol) and glycerol. The polypeptide is Cardiolipin synthase A (Yersinia pseudotuberculosis serotype O:3 (strain YPIII)).